The chain runs to 234 residues: Purine nucleoside phosphorylase DeoD-type (234 aa).

H4 lines the a purine D-ribonucleoside pocket. Phosphate-binding positions include G20, R24, R43, and 87 to 90 (RVGT). Residues 179-181 (EME) and 203-204 (SN) each bind a purine D-ribonucleoside.

It belongs to the PNP/UDP phosphorylase family. As to quaternary structure, homohexamer; trimer of homodimers.

It catalyses the reaction a purine D-ribonucleoside + phosphate = a purine nucleobase + alpha-D-ribose 1-phosphate. The catalysed reaction is a purine 2'-deoxy-D-ribonucleoside + phosphate = a purine nucleobase + 2-deoxy-alpha-D-ribose 1-phosphate. Functionally, catalyzes the reversible phosphorolytic breakdown of the N-glycosidic bond in the beta-(deoxy)ribonucleoside molecules, with the formation of the corresponding free purine bases and pentose-1-phosphate. This is Purine nucleoside phosphorylase DeoD-type from Latilactobacillus sakei subsp. sakei (strain 23K) (Lactobacillus sakei subsp. sakei).